The following is a 371-amino-acid chain: Glycerol-3-phosphate dehydrogenase [NAD(+)] 2 (371 aa).

NAD(+)-binding positions include 18–23, Phe50, and Phe106; that span reads GSGNWG. Lys129 provides a ligand contact to substrate. Ala162 contributes to the NAD(+) binding site. Residue Lys222 is the Proton acceptor of the active site. Residues Arg294 and Gln323 each coordinate NAD(+). 294–295 is a binding site for substrate; it reads RN.

The protein belongs to the NAD-dependent glycerol-3-phosphate dehydrogenase family. As to quaternary structure, interacts with human CFH/complement factor H; the interaction is direct and enables the pathogen to evade the host innate immune system. Interacts with human CFHR1/complement factor H-related protein 1; the interaction is direct. Interacts with human PLG/plasminogen; the interaction is direct and provides active plasmin on the surface of fungal cells.

It localises to the secreted. Its subcellular location is the cell wall. The protein localises to the cytoplasm. It is found in the peroxisome. The catalysed reaction is sn-glycerol 3-phosphate + NAD(+) = dihydroxyacetone phosphate + NADH + H(+). May catalyze the production and accumulation of glycerol during hyperosmotic stress conditions. Glycerol acts as a osmoregulator that prevents loss of water and turgor of the cells. Mediates evasion of the host innate immune system by binding inhibitory components of the host alternative complement system, in a manner dependent on estrogen-induced inhibition of EBP1. The sequence is that of Glycerol-3-phosphate dehydrogenase [NAD(+)] 2 from Candida albicans (strain SC5314 / ATCC MYA-2876) (Yeast).